Consider the following 466-residue polypeptide: ATP synthase subunit beta (466 aa).

Glycine 152–threonine 159 serves as a coordination point for ATP.

This sequence belongs to the ATPase alpha/beta chains family. In terms of assembly, F-type ATPases have 2 components, CF(1) - the catalytic core - and CF(0) - the membrane proton channel. CF(1) has five subunits: alpha(3), beta(3), gamma(1), delta(1), epsilon(1). CF(0) has three main subunits: a(1), b(2) and c(9-12). The alpha and beta chains form an alternating ring which encloses part of the gamma chain. CF(1) is attached to CF(0) by a central stalk formed by the gamma and epsilon chains, while a peripheral stalk is formed by the delta and b chains.

The protein resides in the cell inner membrane. The enzyme catalyses ATP + H2O + 4 H(+)(in) = ADP + phosphate + 5 H(+)(out). Functionally, produces ATP from ADP in the presence of a proton gradient across the membrane. The catalytic sites are hosted primarily by the beta subunits. This chain is ATP synthase subunit beta, found in Sulfurovum sp. (strain NBC37-1).